The primary structure comprises 130 residues: D-ribose pyranase (130 aa).

The Proton donor role is filled by His20. Residues Asp28, His97, and 119–121 (YAN) contribute to the substrate site.

This sequence belongs to the RbsD / FucU family. RbsD subfamily. In terms of assembly, homodecamer.

Its subcellular location is the cytoplasm. It catalyses the reaction beta-D-ribopyranose = beta-D-ribofuranose. Its pathway is carbohydrate metabolism; D-ribose degradation; D-ribose 5-phosphate from beta-D-ribopyranose: step 1/2. Functionally, catalyzes the interconversion of beta-pyran and beta-furan forms of D-ribose. The chain is D-ribose pyranase from Heliobacterium modesticaldum (strain ATCC 51547 / Ice1).